We begin with the raw amino-acid sequence, 321 residues long: Serine/threonine-protein phosphatase PP1 (321 aa).

Mn(2+) is bound by residues Asp60, His62, Asp88, and Asn120. Residue His121 is the Proton donor of the active site. Mn(2+)-binding residues include His169 and His244. Residues 298 to 321 (KKLTNDSNGRPLTPPRNKQQKPKK) form a disordered region.

This sequence belongs to the PPP phosphatase family. As to quaternary structure, interacts with dpiA. Mn(2+) is required as a cofactor.

The catalysed reaction is O-phospho-L-seryl-[protein] + H2O = L-seryl-[protein] + phosphate. It carries out the reaction O-phospho-L-threonyl-[protein] + H2O = L-threonyl-[protein] + phosphate. Its activity is regulated as follows. Inhibited by okadaic acid, tautomycin and calyculin A. Inhibited by phosphatase inhibitor 2 (dpiA). Protein phosphatase activity in vitro. This Dictyostelium discoideum (Social amoeba) protein is Serine/threonine-protein phosphatase PP1 (pppB).